Reading from the N-terminus, the 714-residue chain is Fatty acid oxidation complex subunit alpha (714 aa).

The tract at residues 1 to 190 (MEMASAFTLN…KLGLVDDVVP (190 aa)) is enoyl-CoA hydratase. Residues 306–714 (APLNSVGILG…FWKTTATDLQ (409 aa)) are 3-hydroxyacyl-CoA dehydrogenase.

The protein in the N-terminal section; belongs to the enoyl-CoA hydratase/isomerase family. It in the central section; belongs to the 3-hydroxyacyl-CoA dehydrogenase family. In terms of assembly, heterotetramer of two alpha chains (FadJ) and two beta chains (FadI).

Its subcellular location is the cytoplasm. It catalyses the reaction a (3S)-3-hydroxyacyl-CoA = a (2E)-enoyl-CoA + H2O. It carries out the reaction a 4-saturated-(3S)-3-hydroxyacyl-CoA = a (3E)-enoyl-CoA + H2O. The catalysed reaction is a (3S)-3-hydroxyacyl-CoA + NAD(+) = a 3-oxoacyl-CoA + NADH + H(+). The enzyme catalyses (3S)-3-hydroxybutanoyl-CoA = (3R)-3-hydroxybutanoyl-CoA. The protein operates within lipid metabolism; fatty acid beta-oxidation. Its function is as follows. Catalyzes the formation of a hydroxyacyl-CoA by addition of water on enoyl-CoA. Also exhibits 3-hydroxyacyl-CoA epimerase and 3-hydroxyacyl-CoA dehydrogenase activities. In Escherichia coli (strain ATCC 8739 / DSM 1576 / NBRC 3972 / NCIMB 8545 / WDCM 00012 / Crooks), this protein is Fatty acid oxidation complex subunit alpha.